Reading from the N-terminus, the 268-residue chain is Nickel import ATP-binding protein NikE (268 aa).

The ABC transporter domain occupies 4–252; the sequence is LNISGLSHHY…SSDAGRVLQN (249 aa). 45 to 52 provides a ligand contact to ATP; the sequence is GRSGCGKS.

Belongs to the ABC transporter superfamily. Nickel importer (TC 3.A.1.5.3) family. The complex is composed of two ATP-binding proteins (NikD and NikE), two transmembrane proteins (NikB and NikC) and a solute-binding protein (NikA).

The protein localises to the cell inner membrane. It catalyses the reaction Ni(2+)(out) + ATP + H2O = Ni(2+)(in) + ADP + phosphate + H(+). Functionally, part of the ABC transporter complex NikABCDE involved in nickel import. Responsible for energy coupling to the transport system. This chain is Nickel import ATP-binding protein NikE, found in Escherichia coli (strain K12).